A 1582-amino-acid chain; its full sequence is SET-binding protein (1582 aa).

Disordered stretches follow at residues 1 to 76, 124 to 246, 278 to 416, and 446 to 513; these read MEPR…WVAG, ITIK…KVPA, LLGS…KRQS, and SNSE…KLSE. Polar residues predominate over residues 18–27; the sequence is EFLQGSSSRS. Residues 57–74 show a composition bias toward basic and acidic residues; sequence GSGRDVDCNSNADSEKWV. 2 stretches are compositionally biased toward polar residues: residues 126–141 and 213–229; these read IKQS…GKNS and MEWS…QNCF. The segment covering 278–298 has biased composition (low complexity); that stretch reads LLGSVVPSPSSHNSPATPSSS. A compositionally biased stretch (basic and acidic residues) spans 356–365; the sequence is ETTEGKREAY. Positions 368 to 388 are enriched in polar residues; it reads DSAQEASPARQSISSVSNPEN. The segment covering 450–465 has biased composition (basic and acidic residues); sequence GSKKDPRVPKLGKMIE. Residues 575 to 587 constitute a DNA-binding region (a.T hook 1); that stretch reads KKKRGRPKKQPLL. Disordered stretches follow at residues 595 to 617 and 709 to 787; these read GTST…RKRR and RGTI…ASTE. Residues 770–787 are compositionally biased toward polar residues; it reads LSTQLGGSNGNLSPASTE. The residue at position 808 (K808) is an N6-acetyllysine. A compositionally biased stretch (polar residues) spans 845 to 871; sequence SPVSESHSEETIPSDSGIGTDNNSTSD. A disordered region spans residues 845 to 880; it reads SPVSESHSEETIPSDSGIGTDNNSTSDQAEKSSESR. Positions 1007 to 1019 form a DNA-binding region, a.T hook 2; it reads KKKRGRPAKTNDT. Disordered regions lie at residues 1128–1155, 1182–1215, 1236–1265, 1429–1461, 1470–1489, and 1507–1582; these read VGGA…DRIL, SGSD…VSKN, AKDK…TRSE, QRQS…RDQM, LPSK…EPAS, and EAPP…DVLP. The span at 1137–1150 shows a compositional bias: basic residues; it reads RLHKRKHKHKRKHK. The segment covering 1182–1196 has biased composition (basic and acidic residues); the sequence is SGSDKELPLVSEKSK. A compositionally biased stretch (basic residues) spans 1439–1448; that stretch reads VKKRRGRPRK. The a.T hook 3 DNA-binding region spans 1440-1452; that stretch reads KKRRGRPRKQPSQ. 2 stretches are compositionally biased toward pro residues: residues 1509–1533 and 1546–1559; these read PPLP…PPLP and QPPA…PQPL.

As to quaternary structure, interacts with SET.

The protein localises to the nucleus. This Mus musculus (Mouse) protein is SET-binding protein (Setbp1).